A 178-amino-acid polypeptide reads, in one-letter code: MRRAFIELDRVKGCFFRRGKRKAKKLNSSGAFAFGSSYAGTYLLDKHSRRKNNLYLRSFFFFKFYYCNLFNFNPGFIGAFYHTRPGVFFLDHFFFFNNFLEIPSFFENAAEAEPAQLMGHLVQDCAAQTTGRGLVNFERGLVDSKPKFLDAFFGLLSLKRTTNRFGILFFLIFCLRRA.

Its subcellular location is the mitochondrion. This is an uncharacterized protein from Paramecium tetraurelia.